The chain runs to 116 residues: Large ribosomal subunit protein bL20 (116 aa).

This sequence belongs to the bacterial ribosomal protein bL20 family.

Its function is as follows. Binds directly to 23S ribosomal RNA and is necessary for the in vitro assembly process of the 50S ribosomal subunit. It is not involved in the protein synthesizing functions of that subunit. The polypeptide is Large ribosomal subunit protein bL20 (Helicobacter pylori (strain G27)).